Reading from the N-terminus, the 210-residue chain is uncharacterized protein (210 aa).

This is an uncharacterized protein from Escherichia coli (Bacteriophage T4).